Reading from the N-terminus, the 435-residue chain is Eukaryotic translation initiation factor 3 subunit E (435 aa).

The PCI domain occupies T241 to Q409.

Belongs to the eIF-3 subunit E family. In terms of assembly, component of the eukaryotic translation initiation factor 3 (eIF-3) complex.

It is found in the cytoplasm. Component of the eukaryotic translation initiation factor 3 (eIF-3) complex, which is involved in protein synthesis of a specialized repertoire of mRNAs and, together with other initiation factors, stimulates binding of mRNA and methionyl-tRNAi to the 40S ribosome. The eIF-3 complex specifically targets and initiates translation of a subset of mRNAs involved in cell proliferation. The sequence is that of Eukaryotic translation initiation factor 3 subunit E from Phaeosphaeria nodorum (strain SN15 / ATCC MYA-4574 / FGSC 10173) (Glume blotch fungus).